The sequence spans 250 residues: Adenosylcobinamide-GDP ribazoletransferase (250 aa).

Transmembrane regions (helical) follow at residues 33 to 53 (IASYFPIVGIVIGGILSLFYI), 63 to 83 (IVMTFIVAFSYVLTGAMHIDG), 109 to 129 (LGTNGVLALVFMVVLKILFLT), 137 to 157 (LTALLITPIIGRLSIVFSMMI), 180 to 200 (FAIAFVISIATSYFILPLAVF), and 203 to 223 (ILTISLFVTYIVSKYISLRIG).

The protein belongs to the CobS family. It depends on Mg(2+) as a cofactor.

It localises to the cell membrane. It carries out the reaction alpha-ribazole + adenosylcob(III)inamide-GDP = adenosylcob(III)alamin + GMP + H(+). The catalysed reaction is alpha-ribazole 5'-phosphate + adenosylcob(III)inamide-GDP = adenosylcob(III)alamin 5'-phosphate + GMP + H(+). Its pathway is cofactor biosynthesis; adenosylcobalamin biosynthesis; adenosylcobalamin from cob(II)yrinate a,c-diamide: step 7/7. In terms of biological role, joins adenosylcobinamide-GDP and alpha-ribazole to generate adenosylcobalamin (Ado-cobalamin). Also synthesizes adenosylcobalamin 5'-phosphate from adenosylcobinamide-GDP and alpha-ribazole 5'-phosphate. The sequence is that of Adenosylcobinamide-GDP ribazoletransferase from Thermoanaerobacter sp. (strain X514).